A 103-amino-acid polypeptide reads, in one-letter code: Potassium voltage-gated channel subfamily E member 3 (103 aa).

N-linked (GlcNAc...) asparagine glycosylation is found at Asn-5, Asn-22, and Asn-41. The disordered stretch occupies residues 30 to 52; sequence LCRPGPGPGPDNQTEDRRASLPG. A helical membrane pass occupies residues 57–77; sequence SYMYILFVMFLFAVTVGSLIL. An interaction with KCNQ1 region spans residues 68-79; the sequence is FAVTVGSLILGY. The Cytoplasmic segment spans residues 78-103; the sequence is GYTRSRKVDKRSDPYHVYIKNRVSMI.

The protein belongs to the potassium channel KCNE family. Interacts with KCNB1. Interacts with KCNC2. Associates with KCNC4/Kv3.4. Interacts with KCNQ1; associates with a KCNQ1:KCNE3 stoichiometry of 4:4; produces a current with nearly instantaneous activation with a linear current-voltage relationship and alters membrane raft localization; affects KCNQ1 structure and gating properties.

It localises to the cell membrane. It is found in the cytoplasm. Its subcellular location is the perikaryon. The protein localises to the cell projection. The protein resides in the dendrite. It localises to the membrane raft. In terms of biological role, ancillary protein that functions as a regulatory subunit of the voltage-gated potassium (Kv) channel complex composed of pore-forming and potassium-conducting alpha subunits and of regulatory beta subunits. KCNE3 beta subunit modulates the gating kinetics and enhances stability of the channel complex. Alters the gating of the delayed rectifier Kv channel containing KCNB1 alpha subunit. Associates with KCNC4/Kv3.4 alpha subunit to form the subthreshold Kv channel in skeletal muscle and to establish the resting membrane potential (RMP) in muscle cells. Association with KCNQ1/KCLQT1 alpha subunit may form the intestinal cAMP-stimulated potassium channel involved in chloride secretion that produces a current with nearly instantaneous activation with a linear current-voltage relationship. The protein is Potassium voltage-gated channel subfamily E member 3 of Mus musculus (Mouse).